The following is a 391-amino-acid chain: MEPEPQPEPVTLLVKSPNQRHRDLELSGDRSWSVSRLKAHLSRVYPERPRPEDQRLIYSGKLLLDHQCLQDLLPKQEKRHVLHLVCNVKNPSKMPETSTKGAESTEQPDNSNQTQHPGDSSSDGLRQREVLRNLSPSGWENISRPEAVQQTFQGLGPGFSGYTTYGWLQLSWFQQIYARQYYMQYLAATAASGTFVPTPSAQEIPVVSTPAPAPIHNQFPAENQPANQNAAAQAVVNPGANQNLRMNAQGGPLVEEDDEINRDWLDWTYSAATFSVFLSILYFYSSLSRFLMVMGATVVMYLHHVGWFPFRQRPVQNFPDDGGPRDAANQDPNNNLQGGMDPEMEDPNRLPPDREVLDPEHTSPSFMSTAWLVFKTFFASLLPEGPPALAN.

M1 carries the post-translational modification N-acetylmethionine. The Cytoplasmic portion of the chain corresponds to 1–263 (MEPEPQPEPV…VEEDDEINRD (263 aa)). The region spanning 10 to 72 (VTLLVKSPNQ…LLDHQCLQDL (63 aa)) is the Ubiquitin-like domain. Residues 90-126 (NPSKMPETSTKGAESTEQPDNSNQTQHPGDSSSDGLR) are disordered. The span at 95–124 (PETSTKGAESTEQPDNSNQTQHPGDSSSDG) shows a compositional bias: polar residues. Residues 115–200 (QHPGDSSSDG…ASGTFVPTPS (86 aa)) form an interaction with UBQLN1 region. S135 carries the post-translational modification Phosphoserine. Residues 264-284 (WLDWTYSAATFSVFLSILYFY) traverse the membrane as a helical segment. Residues 285–289 (SSLSR) lie on the Lumenal side of the membrane. A helical transmembrane segment spans residues 290-310 (FLMVMGATVVMYLHHVGWFPF). Over 311–391 (RQRPVQNFPD…LPEGPPALAN (81 aa)) the chain is Cytoplasmic. The interval 317-361 (NFPDDGGPRDAANQDPNNNLQGGMDPEMEDPNRLPPDREVLDPEH) is disordered. Over residues 346 to 361 (DPNRLPPDREVLDPEH) the composition is skewed to basic and acidic residues.

Interacts with PSEN1 and PSEN2. Interacts with UBXN6. Interacts with UBQLN1, UBQLN2 and UBQLN4. Component of the HRD1 complex, which comprises at least SYNV1/HRD1, FAM8A1, HERPUD1/HERP, OS9, SEL1L and UBE2J1. FAM8A1 binding to SYNV1 may promote recruitment of HERPUD1 to the HRD1 complex.

The protein resides in the endoplasmic reticulum membrane. Functionally, component of the endoplasmic reticulum quality control (ERQC) system also called ER-associated degradation (ERAD) involved in ubiquitin-dependent degradation of misfolded endoplasmic reticulum proteins. Binds to ubiquilins and this interaction is required for efficient degradation of CD3D via the ERAD pathway. The protein is Homocysteine-responsive endoplasmic reticulum-resident ubiquitin-like domain member 1 protein (Herpud1) of Mus musculus (Mouse).